A 67-amino-acid chain; its full sequence is Large ribosomal subunit protein bL32 (67 aa).

Positions 1 to 19 (MAVPKRKQSRANTHARRSQ) are enriched in basic residues. Residues 1–20 (MAVPKRKQSRANTHARRSQW) are disordered.

Belongs to the bacterial ribosomal protein bL32 family.

This is Large ribosomal subunit protein bL32 from Leifsonia xyli subsp. xyli (strain CTCB07).